Reading from the N-terminus, the 516-residue chain is MNVFFMFSLLFLAALGSCADDRNPLAECFQENDYEEFLEIARNGLKATSNPKHVVIVGAGMAGLSAAYVLAGAGHQVTVLEASERPGGRVRTYRNEEAGWYANLGPMRLPEKHRIVREYIRKFDLRLNEFSQENDNAWYFIKNIRKKVGEVKKDPGLLKYPVKPSEAGKSAGQLYEESLGKVVEELKRTNCSYILNKYDTYSTKEYLIKEGDLSPGAVDMIGDLLNEDSGYYVSFIESLKHDDIFAYEKRFDEIVDGMDKLPTAMYRDIQDKVHFNAQVIKIQQNDQKVTVVYETLSKETPSVTADYVIVCTTSRAVRLIKFNPPLLPKKAHALRSVHYRSGTKIFLTCTTKFWEDDGIHGGKSTTDLPSRFIYYPNHNFTNGVGVIIAYGIGDDANFFQALDFKDCADIVFNDLSLIHQLPKKDIQSFCYPSVIQKWSLDKYAMGGITTFTPYQFQHFSDPLTASQGRIYFAGEYTAQAHGWIDSTIKSGLRAARDVNLASENPSGIHLSNDNEL.

A signal peptide spans 1–18; that stretch reads MNVFFMFSLLFLAALGSC. A disulfide bond links Cys28 and Cys191. Residues 61–62, 81–82, Arg89, and 105–108 each bind FAD; these read MA, EA, and GPMR. Position 108 (Arg108) interacts with substrate. The N-linked (GlcNAc...) (complex) asparagine glycan is linked to Asn190. His241 contributes to the substrate binding site. Residue Val279 participates in FAD binding. An intrachain disulfide couples Cys349 to Cys430. Asn379 carries N-linked (GlcNAc...) (complex) asparagine glycosylation. Tyr390 serves as a coordination point for substrate. FAD-binding positions include Glu475 and 482–487; that span reads GWIDST. Substrate is bound at residue 482-483; it reads GW.

Homodimer; non-covalently linked. It depends on FAD as a cofactor. N-glycosylated at Asn-190 and Asn-379 with bis-sialylated, biantennary, core-fucosylated dodecasaccharide (composed of N-acetylglucosamine, fucose, mannose, galactose, and sialic acid residues). As to expression, expressed by the venom gland.

The protein localises to the secreted. It catalyses the reaction an L-alpha-amino acid + O2 + H2O = a 2-oxocarboxylate + H2O2 + NH4(+). It carries out the reaction L-leucine + O2 + H2O = 4-methyl-2-oxopentanoate + H2O2 + NH4(+). The catalysed reaction is L-phenylalanine + O2 + H2O = 3-phenylpyruvate + H2O2 + NH4(+). The enzyme catalyses L-tryptophan + O2 + H2O = indole-3-pyruvate + H2O2 + NH4(+). It catalyses the reaction L-methionine + O2 + H2O = 4-methylsulfanyl-2-oxobutanoate + H2O2 + NH4(+). It carries out the reaction L-isoleucine + O2 + H2O = (S)-3-methyl-2-oxopentanoate + H2O2 + NH4(+). The catalysed reaction is L-arginine + O2 + H2O = 5-guanidino-2-oxopentanoate + H2O2 + NH4(+). The enzyme catalyses L-aspartate + O2 + H2O = oxaloacetate + H2O2 + NH4(+). It catalyses the reaction L-histidine + O2 + H2O = 3-(imidazol-5-yl)pyruvate + H2O2 + NH4(+). It carries out the reaction L-2-aminohexanoate + O2 + H2O = 2-oxohexanoate + H2O2 + NH4(+). The catalysed reaction is L-2-aminopentanoate + O2 + H2O = 2-oxopentanoate + H2O2 + NH4(+). Its function is as follows. Catalyzes an oxidative deamination of predominantly hydrophobic and aromatic L-amino acids, thus producing hydrogen peroxide that may contribute to the diverse toxic effects of this enzyme. Shows high affinity for L-Phe, L-Trp, L-Met, L-Leu, and L-Ile, moderate affinity for L-Arg, L-Asp, and L-His, and very low affinity for L-Gln, L-Lys, and L-Ala. Also shows high activity on L-norleucine (L-2-aminohexanoate), and L-norvaline (L-2-aminopentanoate) and a weak activity on L-ornithine and L-aminobutyric acid. Also exhibits diverse biological activities, such as hemorrhage, hemolysis, edema, apoptosis of vascular endothelial cells or tumor cell lines, and antiparasitic activities, as well as regulation of platelet aggregation. Its effect on platelets is controversial, since it either induces aggregation or inhibits agonist-induced aggregation. These different effects are probably due to different experimental conditions. A possible explanation of high efficacy it that LAAO may bind to target cells through its sialylated glycan moiety that would bind to sialic acid-binding lectins (siglec) on target cells. This interaction may result in production of locally high concentrations of hydrogen peroxide in or near the binding interface, leading, in turn to oxidative damage of the siglec or another adjacent cell structural elements. The protein is L-amino-acid oxidase of Calloselasma rhodostoma (Malayan pit viper).